A 406-amino-acid polypeptide reads, in one-letter code: NAC transcription factor NAM-1 (406 aa).

The span at 1–11 (MGSPDSSSGSA) shows a compositional bias: polar residues. The tract at residues 1 to 40 (MGSPDSSSGSAQKPPRHQHQHQPPPPRRQGSAPELPPGFR) is disordered. Residues 35 to 204 (LPPGFRFHPT…DWVLCRIYKK (170 aa)) enclose the NAC domain. A DNA-binding region spans residues 137–210 (VGVKKALVFY…IYKKTSKAAA (74 aa)).

The protein resides in the nucleus. Transcription factor of the NAC family associated with the grain protein content (GPC). Accelerates senescence and increases nutrient remobilization from leaves to developing grains. Sequences of 11 European varieties of H.vulgare tested belongs to the same haplotype while the sequence found in H.spontaneum, an ancestor of the cultivated H.vulgare which has a higher GPC, belongs to an other haplotype. This is NAC transcription factor NAM-1 (NAM-1) from Hordeum vulgare subsp. vulgare (Domesticated barley).